Reading from the N-terminus, the 458-residue chain is Probable M18 family aminopeptidase 1 (458 aa).

The Zn(2+) site is built by His-95, His-170, and His-434.

This sequence belongs to the peptidase M18 family. Requires Zn(2+) as cofactor.

The sequence is that of Probable M18 family aminopeptidase 1 from Borreliella afzelii (strain PKo) (Borrelia afzelii).